A 48-amino-acid polypeptide reads, in one-letter code: Light-harvesting protein B-870 beta chain (48 aa).

Residues 2–21 (AERKGSISGLTDDEAQEFHK) lie on the Cytoplasmic side of the membrane. A bacteriochlorophyll is bound by residues His-20 and His-38. The chain crosses the membrane as a helical span at residues 22 to 44 (FWVQGFVGFTAVAVVAHFLVWVW). Residues 45–48 (RPWL) are Periplasmic-facing.

As to quaternary structure, an alpha/beta heterodimer. The core complex is formed by different alpha and beta chains, binding bacteriochlorophyll molecules, and arranged most probably in tetrameric structures disposed around the reaction center. The non-pigmented gamma chains may constitute additional components.

It is found in the cell inner membrane. In terms of biological role, antenna complexes are light-harvesting systems, which transfer the excitation energy to the reaction centers. The protein is Light-harvesting protein B-870 beta chain (pufB) of Rubrivivax gelatinosus (Rhodocyclus gelatinosus).